A 243-amino-acid chain; its full sequence is uncharacterized protein (243 aa).

This is an uncharacterized protein from Orgyia pseudotsugata multicapsid polyhedrosis virus (OpMNPV).